The primary structure comprises 116 residues: MHTSEMLKHVYDINLSYLLLAQRLISQDKPSAMFRLGISEEMATTLGGLTLPQMVKLAETNQLVCQFRFDSHQTITRLTQDSRVDDLQQIHTGILLSTRLLTEVSQTDEVARKKRA.

Belongs to the FlhD family. In terms of assembly, homodimer; disulfide-linked. Forms a heterohexamer composed of two FlhC and four FlhD subunits. Each FlhC binds a FlhD dimer, forming a heterotrimer, and a hexamer assembles by dimerization of two heterotrimers.

It is found in the cytoplasm. Functions in complex with FlhC as a master transcriptional regulator that regulates transcription of several flagellar and non-flagellar operons by binding to their promoter region. Activates expression of class 2 flagellar genes, including fliA, which is a flagellum-specific sigma factor that turns on the class 3 genes. Also regulates genes whose products function in a variety of physiological pathways. This is Flagellar transcriptional regulator FlhD from Enterobacter sp. (strain 22).